The primary structure comprises 339 residues: tRNA N6-adenosine threonylcarbamoyltransferase (339 aa).

Fe cation-binding residues include His114 and His118. Substrate contacts are provided by residues 137–141 (VVSGG), Asp170, Gly183, Asp187, and Asn277. Asp305 is a binding site for Fe cation.

The protein belongs to the KAE1 / TsaD family. Fe(2+) serves as cofactor.

The protein resides in the cytoplasm. It catalyses the reaction L-threonylcarbamoyladenylate + adenosine(37) in tRNA = N(6)-L-threonylcarbamoyladenosine(37) in tRNA + AMP + H(+). Its function is as follows. Required for the formation of a threonylcarbamoyl group on adenosine at position 37 (t(6)A37) in tRNAs that read codons beginning with adenine. Is involved in the transfer of the threonylcarbamoyl moiety of threonylcarbamoyl-AMP (TC-AMP) to the N6 group of A37, together with TsaE and TsaB. TsaD likely plays a direct catalytic role in this reaction. The polypeptide is tRNA N6-adenosine threonylcarbamoyltransferase (Clostridium beijerinckii (strain ATCC 51743 / NCIMB 8052) (Clostridium acetobutylicum)).